An 87-amino-acid chain; its full sequence is NADH dehydrogenase [ubiquinone] 1 alpha subcomplex subunit 4-like 2 (87 aa).

The protein belongs to the complex I NDUFA4 subunit family.

This chain is NADH dehydrogenase [ubiquinone] 1 alpha subcomplex subunit 4-like 2 (Ndufa4l2), found in Mus musculus (Mouse).